A 130-amino-acid chain; its full sequence is Small ribosomal subunit protein uS8 (130 aa).

It belongs to the universal ribosomal protein uS8 family. Part of the 30S ribosomal subunit. Contacts proteins S5 and S12.

Functionally, one of the primary rRNA binding proteins, it binds directly to 16S rRNA central domain where it helps coordinate assembly of the platform of the 30S subunit. The polypeptide is Small ribosomal subunit protein uS8 (Haemophilus ducreyi (strain 35000HP / ATCC 700724)).